The primary structure comprises 189 residues: Transcription factor FapR (189 aa).

This sequence belongs to the FapR family.

Its function is as follows. Transcriptional factor involved in regulation of membrane lipid biosynthesis by repressing genes involved in fatty acid and phospholipid metabolism. The protein is Transcription factor FapR of Exiguobacterium sibiricum (strain DSM 17290 / CCUG 55495 / CIP 109462 / JCM 13490 / 255-15).